The following is a 126-amino-acid chain: C-type natriuretic peptide 1 (126 aa).

The first 22 residues, Met-1 to Ala-22, serve as a signal peptide directing secretion. Residues Arg-23 to Arg-104 constitute a propeptide that is removed on maturation. The cysteines at positions 110 and 126 are disulfide-linked.

It belongs to the natriuretic peptide family.

The protein localises to the secreted. Its function is as follows. Exhibits natriuretic and vasodepressant activity. Has cGMP-stimulating activity. May help to regulate body fluid homeostasis in a variety of aquatic environments. This chain is C-type natriuretic peptide 1, found in Takifugu rubripes (Japanese pufferfish).